We begin with the raw amino-acid sequence, 526 residues long: Neutrophil cytosol factor 2 (526 aa).

3 TPR repeats span residues 37–70 (SRICFNIGCMYTILKNMTEAEKAFTRSINRDKHL), 71–104 (AVAYFQRGMLYYQTEKYDLAIKDLKEALIQLRGN), and 121–154 (CEVLYNIAFMYAKKEEWKKAEEQLALATSMKSEP). T233 is modified (phosphothreonine). The region spanning 240–299 (LEGEAHRVLFGFVPETKEELQVMPGNIVFVLKKGNDNWATVMFNGQKGLVPCNYLEPVEL) is the SH3 1 domain. Residues 303–315 (PQQQPQEESSPQS) show a composition bias toward low complexity. Positions 303-346 (PQQQPQEESSPQSDIPAPPSSKAPGRPQLSPGQKQKEEPKEVKL) are disordered. Residues 336 to 345 (KQKEEPKEVK) are compositionally biased toward basic and acidic residues. The region spanning 351–429 (PYTLKVHYKY…YCLTLWCENT (79 aa)) is the PB1 domain. At S399 the chain carries Phosphoserine. Residues 433–458 (QGFPDEPKESEKADANNQTTEPQLKK) are disordered. Residues 437–446 (DEPKESEKAD) are compositionally biased toward basic and acidic residues. The 60-residue stretch at 457 to 516 (KKGSQVEALFSYEATQPEDLEFQEGDIILVLSKVNEEWLEGECKGKVGIFPKVFVEDCAT) folds into the SH3 2 domain.

This sequence belongs to the NCF2/NOXA1 family. As to quaternary structure, component of the phagocyte NADPH oxidase complex composed of an obligatory core heterodimer formed by the membrane proteins CYBA and CYBB and the cytosolic regulatory subunits NCF1/p47-phox, NCF2/p67-phox, NCF4/p40-phox and the small GTPase RAC1 or RAC2. Part of a cytosolic complex composed at least by NCF1, NCF2 and NCF4. Interacts with NCF4. Interacts (via the C-terminal SH3 domain) with NCF1 (via C-terminus). Interacts with SYTL1 and RAC1. May interact with NOXO1. Interacts with S100A8 and calprotectin (S100A8/9). Interacts with GBP7 (via GB1/RHD3-type G domain). Interacts with CYBB; the interaction is enhanced in the presence of GBP7.

The protein resides in the cytoplasm. In terms of biological role, subunit of the phagocyte NADPH oxidase complex that mediates the transfer of electrons from cytosolic NADPH to O2 to produce the superoxide anion (O2(-)). In the activated complex, electrons are first transferred from NADPH to flavin adenine dinucleotide (FAD) and subsequently transferred via two heme molecules to molecular oxygen, producing superoxide through an outer-sphere reaction. Activation of the NADPH oxidase complex is initiated by the assembly of cytosolic subunits of the NADPH oxidase complex with the core NADPH oxidase complex to form a complex at the plasma membrane or phagosomal membrane. This activation process is initiated by phosphorylation dependent binding of the cytosolic NCF1/p47-phox subunit to the C-terminus of CYBA/p22-phox. The sequence is that of Neutrophil cytosol factor 2 from Homo sapiens (Human).